A 395-amino-acid chain; its full sequence is L-lactate dehydrogenase (395 aa).

The 380-residue stretch at 1–380 folds into the FMN hydroxy acid dehydrogenase domain; sequence MIISAASDYR…SKDSLVQELS (380 aa). A substrate-binding site is contributed by Tyr-24. Residues Ser-106 and Gln-127 each coordinate FMN. Tyr-129 is a substrate binding site. Thr-155 is a binding site for FMN. Arg-164 lines the substrate pocket. FMN is bound at residue Lys-251. His-275 (proton acceptor) is an active-site residue. Arg-278 is a binding site for substrate. 306–330 is an FMN binding site; the sequence is DSGIRNGLDVVRMIALGADSVLLGR.

This sequence belongs to the FMN-dependent alpha-hydroxy acid dehydrogenase family. FMN serves as cofactor.

The protein localises to the cell inner membrane. It carries out the reaction (S)-lactate + A = pyruvate + AH2. Functionally, catalyzes the conversion of L-lactate to pyruvate. Is coupled to the respiratory chain. The polypeptide is L-lactate dehydrogenase (Enterobacter sp. (strain 638)).